The sequence spans 861 residues: Bifunctional uridylyltransferase/uridylyl-removing enzyme (861 aa).

The segment at 1-321 (MKNDNRIIKN…VYHQKQKIIR (321 aa)) is uridylyltransferase. Residues 322-678 (LDDEFQLSNR…IMPHHSQGGT (357 aa)) form a uridylyl-removing region. The 123-residue stretch at 440–562 (VDQHTLFVIR…LPHARYLDYL (123 aa)) folds into the HD domain. 2 consecutive ACT domains span residues 679 to 760 (EVFI…AVSR) and 788 to 861 (QLFL…KSKY).

It belongs to the GlnD family. It depends on Mg(2+) as a cofactor.

It catalyses the reaction [protein-PII]-L-tyrosine + UTP = [protein-PII]-uridylyl-L-tyrosine + diphosphate. The catalysed reaction is [protein-PII]-uridylyl-L-tyrosine + H2O = [protein-PII]-L-tyrosine + UMP + H(+). With respect to regulation, uridylyltransferase (UTase) activity is inhibited by glutamine, while glutamine activates uridylyl-removing (UR) activity. In terms of biological role, modifies, by uridylylation and deuridylylation, the PII regulatory proteins (GlnB and homologs), in response to the nitrogen status of the cell that GlnD senses through the glutamine level. Under low glutamine levels, catalyzes the conversion of the PII proteins and UTP to PII-UMP and PPi, while under higher glutamine levels, GlnD hydrolyzes PII-UMP to PII and UMP (deuridylylation). Thus, controls uridylylation state and activity of the PII proteins, and plays an important role in the regulation of nitrogen assimilation and metabolism. The polypeptide is Bifunctional uridylyltransferase/uridylyl-removing enzyme (Legionella pneumophila (strain Corby)).